The chain runs to 242 residues: Phosphoribosylaminoimidazole-succinocarboxamide synthase (242 aa).

The protein belongs to the SAICAR synthetase family.

The catalysed reaction is 5-amino-1-(5-phospho-D-ribosyl)imidazole-4-carboxylate + L-aspartate + ATP = (2S)-2-[5-amino-1-(5-phospho-beta-D-ribosyl)imidazole-4-carboxamido]succinate + ADP + phosphate + 2 H(+). It functions in the pathway purine metabolism; IMP biosynthesis via de novo pathway; 5-amino-1-(5-phospho-D-ribosyl)imidazole-4-carboxamide from 5-amino-1-(5-phospho-D-ribosyl)imidazole-4-carboxylate: step 1/2. The protein is Phosphoribosylaminoimidazole-succinocarboxamide synthase of Pediococcus pentosaceus (strain ATCC 25745 / CCUG 21536 / LMG 10740 / 183-1w).